Consider the following 320-residue polypeptide: Transaldolase (320 aa).

Lysine 135 (schiff-base intermediate with substrate) is an active-site residue.

This sequence belongs to the transaldolase family. Type 1 subfamily. In terms of assembly, homodimer.

The protein localises to the cytoplasm. It catalyses the reaction D-sedoheptulose 7-phosphate + D-glyceraldehyde 3-phosphate = D-erythrose 4-phosphate + beta-D-fructose 6-phosphate. The protein operates within carbohydrate degradation; pentose phosphate pathway; D-glyceraldehyde 3-phosphate and beta-D-fructose 6-phosphate from D-ribose 5-phosphate and D-xylulose 5-phosphate (non-oxidative stage): step 2/3. Functionally, transaldolase is important for the balance of metabolites in the pentose-phosphate pathway. The polypeptide is Transaldolase (Colwellia psychrerythraea (strain 34H / ATCC BAA-681) (Vibrio psychroerythus)).